The primary structure comprises 632 residues: tRNA-guanine(15) transglycosylase (632 aa).

Catalysis depends on Asp-86, which acts as the Nucleophile. The substrate site is built by Asp-121 and Gly-186. The PUA domain maps to 553–628 (NLRVFVKNES…IAVKIHEGRD (76 aa)).

The protein belongs to the archaeosine tRNA-ribosyltransferase family. It depends on Zn(2+) as a cofactor.

It catalyses the reaction guanosine(15) in tRNA + 7-cyano-7-deazaguanine = 7-cyano-7-carbaguanosine(15) in tRNA + guanine. It functions in the pathway tRNA modification; archaeosine-tRNA biosynthesis. Exchanges the guanine residue with 7-cyano-7-deazaguanine (preQ0) at position 15 in the dihydrouridine loop (D-loop) of archaeal tRNAs. In Thermoplasma volcanium (strain ATCC 51530 / DSM 4299 / JCM 9571 / NBRC 15438 / GSS1), this protein is tRNA-guanine(15) transglycosylase.